Consider the following 340-residue polypeptide: DNA-directed RNA polymerase subunit alpha (340 aa).

The interval 1–233 (MYRNWRDLIS…EQLSIFINFD (233 aa)) is alpha N-terminal domain (alpha-NTD). The interval 251–340 (INENLYRSVD…RLRGERKDEE (90 aa)) is alpha C-terminal domain (alpha-CTD).

It belongs to the RNA polymerase alpha chain family. As to quaternary structure, homodimer. The RNAP catalytic core consists of 2 alpha, 1 beta, 1 beta' and 1 omega subunit. When a sigma factor is associated with the core the holoenzyme is formed, which can initiate transcription.

It catalyses the reaction RNA(n) + a ribonucleoside 5'-triphosphate = RNA(n+1) + diphosphate. DNA-dependent RNA polymerase catalyzes the transcription of DNA into RNA using the four ribonucleoside triphosphates as substrates. The polypeptide is DNA-directed RNA polymerase subunit alpha (Geobacter sulfurreducens (strain ATCC 51573 / DSM 12127 / PCA)).